Consider the following 195-residue polypeptide: Molybdenum cofactor guanylyltransferase (195 aa).

GTP contacts are provided by residues 12 to 14 (LAG), lysine 25, asparagine 53, aspartate 70, and aspartate 100. Aspartate 100 contacts Mg(2+).

The protein belongs to the MobA family. As to quaternary structure, monomer. Mg(2+) is required as a cofactor.

It localises to the cytoplasm. The catalysed reaction is Mo-molybdopterin + GTP + H(+) = Mo-molybdopterin guanine dinucleotide + diphosphate. Its function is as follows. Transfers a GMP moiety from GTP to Mo-molybdopterin (Mo-MPT) cofactor (Moco or molybdenum cofactor) to form Mo-molybdopterin guanine dinucleotide (Mo-MGD) cofactor. This Vibrio campbellii (strain ATCC BAA-1116) protein is Molybdenum cofactor guanylyltransferase.